Here is a 186-residue protein sequence, read N- to C-terminus: Negative modulator of initiation of replication (186 aa).

The interaction with DNA stretch occupies residues 93-94; it reads AV.

It belongs to the SeqA family. As to quaternary structure, homodimer. Polymerizes to form helical filaments.

Its subcellular location is the cytoplasm. Its function is as follows. Negative regulator of replication initiation, which contributes to regulation of DNA replication and ensures that replication initiation occurs exactly once per chromosome per cell cycle. Binds to pairs of hemimethylated GATC sequences in the oriC region, thus preventing assembly of replication proteins and re-initiation at newly replicated origins. Repression is relieved when the region becomes fully methylated. The polypeptide is Negative modulator of initiation of replication (Shewanella halifaxensis (strain HAW-EB4)).